The chain runs to 270 residues: Tryptophan synthase alpha chain (270 aa).

Residues Glu-49 and Asp-60 each act as proton acceptor in the active site.

This sequence belongs to the TrpA family. As to quaternary structure, tetramer of two alpha and two beta chains.

It carries out the reaction (1S,2R)-1-C-(indol-3-yl)glycerol 3-phosphate + L-serine = D-glyceraldehyde 3-phosphate + L-tryptophan + H2O. Its pathway is amino-acid biosynthesis; L-tryptophan biosynthesis; L-tryptophan from chorismate: step 5/5. Functionally, the alpha subunit is responsible for the aldol cleavage of indoleglycerol phosphate to indole and glyceraldehyde 3-phosphate. The sequence is that of Tryptophan synthase alpha chain from Gluconobacter oxydans (strain 621H) (Gluconobacter suboxydans).